We begin with the raw amino-acid sequence, 365 residues long: DNA replication and repair protein RecF (365 aa).

30–37 (GDNGEGKT) is a binding site for ATP.

The protein belongs to the RecF family.

It is found in the cytoplasm. Its function is as follows. The RecF protein is involved in DNA metabolism; it is required for DNA replication and normal SOS inducibility. RecF binds preferentially to single-stranded, linear DNA. It also seems to bind ATP. This chain is DNA replication and repair protein RecF, found in Leptospira interrogans serogroup Icterohaemorrhagiae serovar Lai (strain 56601).